The following is a 315-amino-acid chain: Ribosomal protein L11 methyltransferase (315 aa).

Positions 163, 184, 206, and 248 each coordinate S-adenosyl-L-methionine.

This sequence belongs to the methyltransferase superfamily. PrmA family.

The protein localises to the cytoplasm. It catalyses the reaction L-lysyl-[protein] + 3 S-adenosyl-L-methionine = N(6),N(6),N(6)-trimethyl-L-lysyl-[protein] + 3 S-adenosyl-L-homocysteine + 3 H(+). In terms of biological role, methylates ribosomal protein L11. This Lacticaseibacillus paracasei (strain ATCC 334 / BCRC 17002 / CCUG 31169 / CIP 107868 / KCTC 3260 / NRRL B-441) (Lactobacillus paracasei) protein is Ribosomal protein L11 methyltransferase.